The chain runs to 261 residues: Triosephosphate isomerase (261 aa).

10 to 12 (NWK) lines the substrate pocket. Catalysis depends on His-100, which acts as the Electrophile. Glu-172 (proton acceptor) is an active-site residue. Substrate is bound by residues Gly-178, Ser-218, and 239–240 (GG).

This sequence belongs to the triosephosphate isomerase family. As to quaternary structure, homodimer.

The protein localises to the cytoplasm. It carries out the reaction D-glyceraldehyde 3-phosphate = dihydroxyacetone phosphate. It participates in carbohydrate biosynthesis; gluconeogenesis. The protein operates within carbohydrate degradation; glycolysis; D-glyceraldehyde 3-phosphate from glycerone phosphate: step 1/1. Functionally, involved in the gluconeogenesis. Catalyzes stereospecifically the conversion of dihydroxyacetone phosphate (DHAP) to D-glyceraldehyde-3-phosphate (G3P). In Mycobacterium avium (strain 104), this protein is Triosephosphate isomerase.